Here is a 1235-residue protein sequence, read N- to C-terminus: Phosphorylase b kinase regulatory subunit alpha, liver isoform (1235 aa).

3 positions are modified to phosphoserine: Ser697, Ser731, and Ser737. The tract at residues 808-838 (LSELYGKAGLNQEWGLIRYISGLLRKKVEVL) is calmodulin-binding. Residues 976–986 (SSASSPAISIH) show a composition bias toward low complexity. The segment at 976–1002 (SSASSPAISIHEVGHTGVTKTERSGIN) is disordered. Ser984, Ser1016, and Ser1044 each carry phosphoserine. The span at 1032–1053 (AYSKSVRSSTPSSPTGTSSSDS) shows a compositional bias: low complexity. The disordered stretch occupies residues 1032–1060 (AYSKSVRSSTPSSPTGTSSSDSGGHHISW). A calmodulin-binding region spans residues 1059–1099 (SWGERQGQWLRRRRLDGAINRVPVGFYQRVWKILQKCHGLS). Residue Cys1232 is the site of S-farnesyl cysteine attachment.

The protein belongs to the phosphorylase b kinase regulatory chain family. Hexadecamer of 4 heterotetramers, each composed of alpha, beta, gamma, and delta subunits. Alpha (PHKA1 or PHKA2) and beta (PHKB) are regulatory subunits, gamma (PHKG1 or PHKG2) is the catalytic subunit, and delta is calmodulin. In terms of processing, although the final Cys may be farnesylated, the terminal tripeptide is probably not removed, and the C-terminus is not methylated. As to expression, predominantly expressed in liver and other non-muscle tissues.

The protein resides in the cell membrane. It functions in the pathway glycan biosynthesis; glycogen metabolism. Its activity is regulated as follows. By phosphorylation of various serine residues and by calcium. Its function is as follows. Phosphorylase b kinase catalyzes the phosphorylation of serine in certain substrates, including troponin I. The alpha chain may bind calmodulin. The chain is Phosphorylase b kinase regulatory subunit alpha, liver isoform (PHKA2) from Oryctolagus cuniculus (Rabbit).